We begin with the raw amino-acid sequence, 417 residues long: Dihydroorotase (417 aa).

Zn(2+)-binding residues include histidine 60 and histidine 62. Substrate is bound by residues 62–64 and asparagine 94; that span reads HLR. The Zn(2+) site is built by lysine 138, histidine 167, histidine 207, and aspartate 275. The residue at position 138 (lysine 138) is an N6-carboxylysine. Aspartate 275 is a catalytic residue. Residues histidine 279 and 289-290 each bind substrate; that span reads AG.

Belongs to the metallo-dependent hydrolases superfamily. DHOase family. Class I DHOase subfamily. The cofactor is Zn(2+).

The enzyme catalyses (S)-dihydroorotate + H2O = N-carbamoyl-L-aspartate + H(+). The protein operates within pyrimidine metabolism; UMP biosynthesis via de novo pathway; (S)-dihydroorotate from bicarbonate: step 3/3. Catalyzes the reversible cyclization of carbamoyl aspartate to dihydroorotate. The protein is Dihydroorotase of Pyrococcus horikoshii (strain ATCC 700860 / DSM 12428 / JCM 9974 / NBRC 100139 / OT-3).